Consider the following 2184-residue polypeptide: Genome polyprotein (2184 aa).

The N-myristoyl glycine; by host moiety is linked to residue Gly2. Residues 2–1494 (GAQVSTQKTG…HVSRAFICLQ (1493 aa)) are Cytoplasmic-facing. An amphipathic alpha-helix region spans residues 567 to 583 (FYQGDVQNAVEGAMVRV). Active-site for protease 2A activity residues include His871 and Asp889. Residues Cys906 and Cys908 each coordinate Zn(2+). Cys960 acts as the For protease 2A activity in catalysis. Positions 966 and 968 each coordinate Zn(2+). A membrane-binding region spans residues 1100–1172 (NNGWLKKFTE…EQSAPSQGDQ (73 aa)). An oligomerization region spans residues 1100–1238 (NNGWLKKFTE…SPGAGKSVAT (139 aa)). An RNA-binding region spans residues 1121-1125 (AIKIQ). The 157-residue stretch at 1204–1360 (EKKMSNYIQF…SMYSQNGKIN (157 aa)) folds into the SF3 helicase domain. Residues Cys1368, Cys1380, and Cys1385 each coordinate Zn(2+). The C4-type; degenerate zinc-finger motif lies at 1368 to 1385 (CDEDCCPVNFKKCCPLVC). Positions 1412–1419 (EYNHRHSV) are RNA-binding. Positions 1423–1428 (LEALFQ) are oligomerization. Residues 1495–1510 (ALTTFVSVAGIIYIIY) lie within the membrane without spanning it. At 1511–2184 (KLFAGFQGAY…TLRRKWLDSF (674 aa)) the chain is on the cytoplasmic side. Tyr1520 bears the O-(5'-phospho-RNA)-tyrosine mark. The Peptidase C3 domain maps to 1540 to 1718 (GPAFEFAVAM…FSAALLRHYF (179 aa)). Catalysis depends on for protease 3C activity residues His1579, Glu1610, and Cys1686. Positions 1949–2065 (GHLIAFDYSG…SYPWPIDASL (117 aa)) constitute a RdRp catalytic domain. Asp1955 and Asp2051 together coordinate Mg(2+).

This sequence belongs to the picornaviruses polyprotein family. As to quaternary structure, interacts with capsid protein VP1 and capsid protein VP3 to form heterotrimeric protomers. In terms of assembly, interacts with capsid protein VP0, and capsid protein VP3 to form heterotrimeric protomers. Five protomers subsequently associate to form pentamers which serve as building blocks for the capsid. Interacts with capsid protein VP2, capsid protein VP3 and capsid protein VP4 following cleavage of capsid protein VP0. Interacts with capsid protein VP1 and capsid protein VP3 in the mature capsid. As to quaternary structure, interacts with capsid protein VP0 and capsid protein VP1 to form heterotrimeric protomers. Five protomers subsequently associate to form pentamers which serve as building blocks for the capsid. Interacts with capsid protein VP4 in the mature capsid. Interacts with protein 2C; this interaction may be important for virion morphogenesis. In terms of assembly, interacts with capsid protein VP1 and capsid protein VP3. Homodimer. As to quaternary structure, homohexamer; forms a hexameric ring structure with 6-fold symmetry characteristic of AAA+ ATPases. Interacts (via N-terminus) with host RTN3 (via reticulon domain); this interaction is important for viral replication. Interacts with capsid protein VP3; this interaction may be important for virion morphogenesis. In terms of assembly, interacts with protein 3CD. Homodimer. Interacts with host GBF1. Interacts (via GOLD domain) with host ACBD3 (via GOLD domain); this interaction allows the formation of a viral protein 3A/ACBD3 heterotetramer with a 2:2 stoichiometry, which will stimulate the recruitment of host PI4KB in order to synthesize PI4P at the viral RNA replication sites. As to quaternary structure, interacts with RNA-directed RNA polymerase. In terms of assembly, interacts with protein 3AB and with RNA-directed RNA polymerase. Interacts with Viral protein genome-linked and with protein 3CD. It depends on Mg(2+) as a cofactor. In terms of processing, specific enzymatic cleavages in vivo by the viral proteases yield processing intermediates and the mature proteins. Post-translationally, myristoylation is required for the formation of pentamers during virus assembly. Further assembly of 12 pentamers and a molecule of genomic RNA generates the provirion. During virion maturation, immature virions are rendered infectious following cleavage of VP0 into VP4 and VP2. This maturation seems to be an autocatalytic event triggered by the presence of RNA in the capsid and it is followed by a conformational change infectious virion. In terms of processing, myristoylation is required during RNA encapsidation and formation of the mature virus particle. Post-translationally, VPg is uridylylated by the polymerase into VPg-pUpU. This acts as a nucleotide-peptide primer for the genomic RNA replication.

It is found in the virion. It localises to the host cytoplasm. Its subcellular location is the host cytoplasmic vesicle membrane. The protein localises to the host nucleus. The enzyme catalyses a ribonucleoside 5'-triphosphate + H2O = a ribonucleoside 5'-diphosphate + phosphate + H(+). It carries out the reaction Selective cleavage of Tyr-|-Gly bond in the picornavirus polyprotein.. The catalysed reaction is RNA(n) + a ribonucleoside 5'-triphosphate = RNA(n+1) + diphosphate. It catalyses the reaction Selective cleavage of Gln-|-Gly bond in the poliovirus polyprotein. In other picornavirus reactions Glu may be substituted for Gln, and Ser or Thr for Gly.. With respect to regulation, replication or transcription is subject to high level of random mutations by the nucleotide analog ribavirin. Forms an icosahedral capsid of pseudo T=3 symmetry with capsid proteins VP2 and VP3. The capsid is 300 Angstroms in diameter, composed of 60 copies of each capsid protein and enclosing the viral positive strand RNA genome. Capsid protein VP1 mainly forms the vertices of the capsid. Capsid protein VP1 interacts with host ITGA2/ITGB1 to provide virion attachment to target host cells. This attachment induces virion internalization predominantly through caveolin-mediated endocytosis. Tyrosine kinases are probably involved in the entry process. After binding to its receptor, the capsid undergoes conformational changes. Capsid protein VP1 N-terminus (that contains an amphipathic alpha-helix) and capsid protein VP4 are externalized. Together, they shape a pore in the host membrane through which viral genome is translocated to host cell cytoplasm. In terms of biological role, forms an icosahedral capsid of pseudo T=3 symmetry with capsid proteins VP2 and VP3. The capsid is 300 Angstroms in diameter, composed of 60 copies of each capsid protein and enclosing the viral positive strand RNA genome. Its function is as follows. Lies on the inner surface of the capsid shell. After binding to the host receptor, the capsid undergoes conformational changes. Capsid protein VP4 is released, Capsid protein VP1 N-terminus is externalized, and together, they shape a pore in the host membrane through which the viral genome is translocated into the host cell cytoplasm. Functionally, component of immature procapsids, which is cleaved into capsid proteins VP4 and VP2 after maturation. Allows the capsid to remain inactive before the maturation step. Cysteine protease that cleaves viral polyprotein and specific host proteins. It is responsible for the autocatalytic cleavage between the P1 and P2 regions, which is the first cleavage occurring in the polyprotein. Also cleaves the host translation initiation factor EIF4G1, in order to shut down the capped cellular mRNA translation. Inhibits the host nucleus-cytoplasm protein and RNA trafficking by cleaving host members of the nuclear pores. Counteracts stress granule formation probably by antagonizing its assembly or promoting its dissassembly. In terms of biological role, plays an essential role in the virus replication cycle by acting as a viroporin. Creates a pore in the host endoplasmic reticulum and as a consequence releases Ca2+ in the cytoplasm of infected cell. In turn, high levels of cytoplasmic calcium may trigger membrane trafficking and transport of viral ER-associated proteins to viroplasms, sites of viral genome replication. Its function is as follows. Induces and associates with structural rearrangements of intracellular membranes. Displays RNA-binding, nucleotide binding and NTPase activities. May play a role in virion morphogenesis and viral RNA encapsidation by interacting with the capsid protein VP3. Functionally, localizes the viral replication complex to the surface of membranous vesicles. Together with protein 3CD binds the Cis-Active RNA Element (CRE) which is involved in RNA synthesis initiation. Acts as a cofactor to stimulate the activity of 3D polymerase, maybe through a nucleid acid chaperone activity. Localizes the viral replication complex to the surface of membranous vesicles. It inhibits host cell endoplasmic reticulum-to-Golgi apparatus transport and causes the disassembly of the Golgi complex, possibly through GBF1 interaction. This would result in depletion of MHC, trail receptors and IFN receptors at the host cell surface. Plays an essential role in viral RNA replication by recruiting ACBD3 and PI4KB at the viral replication sites, thereby allowing the formation of the rearranged membranous structures where viral replication takes place. In terms of biological role, acts as a primer for viral RNA replication and remains covalently bound to viral genomic RNA. VPg is uridylylated prior to priming replication into VPg-pUpU. The oriI viral genomic sequence may act as a template for this. The VPg-pUpU is then used as primer on the genomic RNA poly(A) by the RNA-dependent RNA polymerase to replicate the viral genome. During genome replication, the VPg-RNA linkage is removed by the host TDP2, thereby accelerating replication. During the late stage of the replication cycle, host TDP2 is excluded from sites of viral RNA synthesis and encapsidation, allowing for the generation of progeny virions. Its function is as follows. Involved in the viral replication complex and viral polypeptide maturation. It exhibits protease activity with a specificity and catalytic efficiency that is different from protease 3C. Protein 3CD lacks polymerase activity. Protein 3CD binds to the 5'UTR of the viral genome. Functionally, replicates the viral genomic RNA on the surface of intracellular membranes. May form linear arrays of subunits that propagate along a strong head-to-tail interaction called interface-I. Covalently attaches UMP to a tyrosine of VPg, which is used to prime RNA synthesis. The positive stranded RNA genome is first replicated at virus induced membranous vesicles, creating a dsRNA genomic replication form. This dsRNA is then used as template to synthesize positive stranded RNA genomes. ss(+)RNA genomes are either translated, replicated or encapsidated. Major viral protease that mediates proteolytic processing of the polyprotein. Cleaves host EIF5B, contributing to host translation shutoff. Also cleaves host PABPC1, contributing to host translation shutoff. Cleaves host NLRP1, triggers host N-glycine-mediated degradation of the autoinhibitory NLRP1 N-terminal fragment. The polypeptide is Genome polyprotein (Homo sapiens (Human)).